We begin with the raw amino-acid sequence, 493 residues long: Glutamyl-tRNA(Gln) amidotransferase subunit A (493 aa).

Residues Lys-79 and Ser-159 each act as charge relay system in the active site. Ser-183 serves as the catalytic Acyl-ester intermediate.

The protein belongs to the amidase family. GatA subfamily. As to quaternary structure, heterotrimer of A, B and C subunits.

The catalysed reaction is L-glutamyl-tRNA(Gln) + L-glutamine + ATP + H2O = L-glutaminyl-tRNA(Gln) + L-glutamate + ADP + phosphate + H(+). Its function is as follows. Allows the formation of correctly charged Gln-tRNA(Gln) through the transamidation of misacylated Glu-tRNA(Gln) in organisms which lack glutaminyl-tRNA synthetase. The reaction takes place in the presence of glutamine and ATP through an activated gamma-phospho-Glu-tRNA(Gln). This Brucella canis (strain ATCC 23365 / NCTC 10854 / RM-666) protein is Glutamyl-tRNA(Gln) amidotransferase subunit A.